Here is a 301-residue protein sequence, read N- to C-terminus: D-alanine--D-alanine ligase (301 aa).

The ATP-grasp domain occupies 99–294 (KCILKAANIR…FSELIDMIID (196 aa)). Position 126 to 181 (126 to 181 (IEGMGYPVVVKPTHGGSSVATFIIKEEKDIKNAVTEAFKWDSEVIIEKFIKGDEIT)) interacts with ATP. 3 residues coordinate Mg(2+): Asp-248, Glu-261, and Asn-263.

This sequence belongs to the D-alanine--D-alanine ligase family. It depends on Mg(2+) as a cofactor. Requires Mn(2+) as cofactor.

It is found in the cytoplasm. It carries out the reaction 2 D-alanine + ATP = D-alanyl-D-alanine + ADP + phosphate + H(+). It functions in the pathway cell wall biogenesis; peptidoglycan biosynthesis. Functionally, cell wall formation. This is D-alanine--D-alanine ligase from Clostridium botulinum (strain Eklund 17B / Type B).